A 328-amino-acid polypeptide reads, in one-letter code: Stress response kinase A (328 aa).

Asp-201 acts as the Proton acceptor in catalysis. Mg(2+) is bound by residues Asn-206 and Asp-217. The active site involves Asp-217.

It belongs to the SrkA/RdoA protein kinase family. Monomer. It depends on Mg(2+) as a cofactor.

It is found in the cytoplasm. The catalysed reaction is L-seryl-[protein] + ATP = O-phospho-L-seryl-[protein] + ADP + H(+). It carries out the reaction L-threonyl-[protein] + ATP = O-phospho-L-threonyl-[protein] + ADP + H(+). Functionally, a protein kinase that phosphorylates Ser and Thr residues. Probably acts to suppress the effects of stress linked to accumulation of reactive oxygen species. Probably involved in the extracytoplasmic stress response. The sequence is that of Stress response kinase A from Escherichia coli O6:H1 (strain CFT073 / ATCC 700928 / UPEC).